The sequence spans 62 residues: Ferredoxin-1 (62 aa).

4Fe-4S ferredoxin-type domains are found at residues A2–S28 and E29–G62. C9, C12, C15, C19, C38, C41, C50, and C54 together coordinate [4Fe-4S] cluster.

Requires [4Fe-4S] cluster as cofactor.

Functionally, ferredoxins are iron-sulfur proteins that transfer electrons in a wide variety of metabolic reactions. The polypeptide is Ferredoxin-1 (Chlorobaculum tepidum (strain ATCC 49652 / DSM 12025 / NBRC 103806 / TLS) (Chlorobium tepidum)).